Here is an 82-residue protein sequence, read N- to C-terminus: NADH-ubiquinone oxidoreductase 9.5 kDa subunit (82 aa).

Residues 25 to 43 (AYFYSCVIAGLGPVFLTVV) traverse the membrane as a helical segment.

The protein belongs to the complex I NDUFA3 subunit family. As to quaternary structure, complex I is composed of about 40 different subunits.

Its subcellular location is the mitochondrion inner membrane. Functionally, accessory subunit of the mitochondrial membrane respiratory chain NADH dehydrogenase (Complex I), that is believed not to be involved in catalysis. Complex I functions in the transfer of electrons from NADH to the respiratory chain. The immediate electron acceptor for the enzyme is believed to be ubiquinone. This subunit binds ubiquinone. The protein is NADH-ubiquinone oxidoreductase 9.5 kDa subunit (nuo9.5) of Neurospora crassa (strain ATCC 24698 / 74-OR23-1A / CBS 708.71 / DSM 1257 / FGSC 987).